The chain runs to 244 residues: Putative membrane peptidase YdiL (244 aa).

A run of 6 helical transmembrane segments spans residues 7–27 (FIIL…PLLF), 44–64 (AQGL…LLIL), 80–100 (IGLS…SQGI), 127–147 (AVPL…EIIF), 159–179 (TNFF…HADL), and 202–222 (IWVP…MQLE). Catalysis depends on proton donor/acceptor residues Glu-143 and His-176.

It belongs to the peptidase U48 family.

Its subcellular location is the cell membrane. May function as endopeptidase which proteolytically removes the C-terminal three residues of farnesylated peptides containing the CAAX motif where C is cysteine, A is an aliphatic amino acid and X is any amino acid. In Bacillus subtilis (strain 168), this protein is Putative membrane peptidase YdiL (ydiL).